The following is a 432-amino-acid chain: Adenosine 3'-phospho 5'-phosphosulfate transporter 1 (432 aa).

Transmembrane regions (helical) follow at residues 5-25 (WWAV…ETPE), 40-60 (VVNA…VQYF), 109-129 (ALKL…WGVL), 154-174 (FLVL…CVLC), 238-258 (WEYL…LSSG), 265-285 (PATT…DSFT), 299-319 (SVQM…GSLL), 353-373 (LFIF…IMTL), and 387-407 (GHTV…ALLL). Ser427 is subject to Phosphoserine.

The protein belongs to the nucleotide-sugar transporter family. SLC35B subfamily. As to expression, highly expressed in the placenta, pancreas, mammary gland and skeletal muscle. Weakly or not expressed in colon, heart and prostate. Expressed in the brain, predominantly in frontal lobe gray matter, subcortical frontal white matter and cerebellum.

Its subcellular location is the golgi apparatus membrane. The catalysed reaction is 3'-phosphoadenylyl sulfate(in) + adenosine 3',5'-bisphosphate(out) = 3'-phosphoadenylyl sulfate(out) + adenosine 3',5'-bisphosphate(in). Its function is as follows. Probably functions as a 3'-phosphoadenylyl sulfate:adenosine 3',5'-bisphosphate antiporter at the Golgi membranes. Mediates the transport from the cytosol into the lumen of the Golgi of 3'-phosphoadenylyl sulfate/adenosine 3'-phospho 5'-phosphosulfate (PAPS), a universal sulfuryl donor for sulfation events that take place in that compartment. The protein is Adenosine 3'-phospho 5'-phosphosulfate transporter 1 of Homo sapiens (Human).